The following is a 77-amino-acid chain: Conotoxin ArMKLT2-0251 (77 aa).

A signal peptide spans 1–22; it reads MKLTCVLIVAVLILTACQLIAA. Positions 23 to 46 are excised as a propeptide; sequence DDSRDLKRFSRRKMRDGMLNTKNM. Pyrrolidone carboxylic acid is present on glutamine 49. Intrachain disulfides connect cysteine 50-cysteine 65, cysteine 57-cysteine 68, and cysteine 64-cysteine 73.

This sequence belongs to the conotoxin O1 superfamily. In terms of tissue distribution, expressed by the venom duct.

Its subcellular location is the secreted. The polypeptide is Conotoxin ArMKLT2-0251 (Conus arenatus (Sand-dusted cone)).